The following is a 1400-amino-acid chain: DNA-directed RNA polymerase subunit beta' (1400 aa).

Residues cysteine 71, cysteine 73, cysteine 86, and cysteine 89 each coordinate Zn(2+). Mg(2+) is bound by residues aspartate 462, aspartate 464, and aspartate 466. Cysteine 811, cysteine 885, cysteine 892, and cysteine 895 together coordinate Zn(2+).

This sequence belongs to the RNA polymerase beta' chain family. As to quaternary structure, the RNAP catalytic core consists of 2 alpha, 1 beta, 1 beta' and 1 omega subunit. When a sigma factor is associated with the core the holoenzyme is formed, which can initiate transcription. Mg(2+) serves as cofactor. The cofactor is Zn(2+).

The catalysed reaction is RNA(n) + a ribonucleoside 5'-triphosphate = RNA(n+1) + diphosphate. Its function is as follows. DNA-dependent RNA polymerase catalyzes the transcription of DNA into RNA using the four ribonucleoside triphosphates as substrates. In Brucella canis (strain ATCC 23365 / NCTC 10854 / RM-666), this protein is DNA-directed RNA polymerase subunit beta'.